The primary structure comprises 120 residues: Large ribosomal subunit protein bL21 (120 aa).

The protein belongs to the bacterial ribosomal protein bL21 family. In terms of assembly, part of the 50S ribosomal subunit. Contacts protein L20.

Functionally, this protein binds to 23S rRNA in the presence of protein L20. The protein is Large ribosomal subunit protein bL21 of Rhizorhabdus wittichii (strain DSM 6014 / CCUG 31198 / JCM 15750 / NBRC 105917 / EY 4224 / RW1) (Sphingomonas wittichii).